Reading from the N-terminus, the 428-residue chain is 3-phosphoshikimate 1-carboxyvinyltransferase (428 aa).

Positions 21, 22, and 26 each coordinate 3-phosphoshikimate. Lysine 21 lines the phosphoenolpyruvate pocket. Positions 94 and 122 each coordinate phosphoenolpyruvate. Serine 166, serine 167, glutamine 168, serine 194, aspartate 306, and lysine 333 together coordinate 3-phosphoshikimate. A phosphoenolpyruvate-binding site is contributed by glutamine 168. Aspartate 306 (proton acceptor) is an active-site residue. Phosphoenolpyruvate-binding residues include arginine 337, arginine 379, and lysine 405.

This sequence belongs to the EPSP synthase family. Monomer.

The protein localises to the cytoplasm. The enzyme catalyses 3-phosphoshikimate + phosphoenolpyruvate = 5-O-(1-carboxyvinyl)-3-phosphoshikimate + phosphate. It participates in metabolic intermediate biosynthesis; chorismate biosynthesis; chorismate from D-erythrose 4-phosphate and phosphoenolpyruvate: step 6/7. Its function is as follows. Catalyzes the transfer of the enolpyruvyl moiety of phosphoenolpyruvate (PEP) to the 5-hydroxyl of shikimate-3-phosphate (S3P) to produce enolpyruvyl shikimate-3-phosphate and inorganic phosphate. This chain is 3-phosphoshikimate 1-carboxyvinyltransferase, found in Clostridium acetobutylicum (strain ATCC 824 / DSM 792 / JCM 1419 / IAM 19013 / LMG 5710 / NBRC 13948 / NRRL B-527 / VKM B-1787 / 2291 / W).